We begin with the raw amino-acid sequence, 188 residues long: Succinate dehydrogenase [ubiquinone] cytochrome b large subunit, mitochondrial (188 aa).

Residues 1–31 constitute a mitochondrion transit peptide; it reads MSLLPYNATLCRVLRHNVKFIRSVQTSAARV. At 32–69 the chain is on the mitochondrial matrix side; the sequence is SAEKTPIQVWGWDYLMRQRALKRPIAPHLTIYKPQMTW. A helical membrane pass occupies residues 70–95; sequence MVSGLHRVTGCAMAGTLLIGGVGFSV. A rhodoquinol-binding residues include S72 and R76. A ubiquinone is bound by residues S72 and R76. The Mitochondrial intermembrane portion of the chain corresponds to 96–113; the sequence is LPLDFTTFVEFIRGLGIP. The chain crosses the membrane as a helical span at residues 114 to 140; sequence WVILDTFKFIIAFPIAFHTLNGIRFIG. A heme b-binding site is contributed by H131. Residues 141–153 lie on the Mitochondrial matrix side of the membrane; the sequence is FDMAKGTDIPSIY. A helical membrane pass occupies residues 154–176; the sequence is RGAYLVLGLAALISLAVVVYPRW. The Mitochondrial intermembrane portion of the chain corresponds to 177–188; sequence ERHKKATLPTNH.

It belongs to the cytochrome b558 family. Component of the mitochondrial electron transport chain complex II composed of four subunits: a flavoprotein (Fp), an iron-sulfur protein (Ip), and a large cytochrome b (CybL) subunit and a small cytochrome b (CybS) subunit. There are 2 developmental stage-specific forms of complex II which have the Ip and CybL subunits in common. Complex II from the free-living larvae (aerobic environment) acts as a succinate dehydrogenase and is composed of the common subunit Ip and CybL and the stage specific subunits FpL and CybSL. Complex II from parasitic larvae and adults (anaerobic environment) acts as a fumarate reductase and is composed of the common subunit Ip and CybL and the stage specific subunits FpA and CybSA. Heme b serves as cofactor. Expressed in adult muscles (at protein level).

The protein resides in the mitochondrion inner membrane. It functions in the pathway carbohydrate metabolism; tricarboxylic acid cycle; fumarate from succinate (eukaryal route): step 1/1. Membrane-bound large subunit (CybL) of the mitochondrial electron transport chain complex II, which together with the membrane-bound small subunit (CybS), anchor the catalytic subunits to the inner mitochondria membrane. During the free-living egg-larvae stages, which occur in an aerobic environment, complex II acts as a succinate dehydrogenase by transferring electrons from succinate to ubiquinone. During the parasitic larvae and adult stages, which occur in an anaerobic environment, complex II acts as a fumarate reductase by transferring electrons from rhodoquinol to fumarate. The polypeptide is Succinate dehydrogenase [ubiquinone] cytochrome b large subunit, mitochondrial (Ascaris suum (Pig roundworm)).